Consider the following 431-residue polypeptide: Enolase (431 aa).

A (2R)-2-phosphoglycerate-binding site is contributed by Q167. E209 functions as the Proton donor in the catalytic mechanism. Residues D246, E289, and D316 each contribute to the Mg(2+) site. Residues K341, R370, S371, and K392 each contribute to the (2R)-2-phosphoglycerate site. The active-site Proton acceptor is K341.

The protein belongs to the enolase family. In terms of assembly, component of the RNA degradosome, a multiprotein complex involved in RNA processing and mRNA degradation. Mg(2+) is required as a cofactor.

Its subcellular location is the cytoplasm. It is found in the secreted. The protein resides in the cell surface. It carries out the reaction (2R)-2-phosphoglycerate = phosphoenolpyruvate + H2O. It functions in the pathway carbohydrate degradation; glycolysis; pyruvate from D-glyceraldehyde 3-phosphate: step 4/5. Functionally, catalyzes the reversible conversion of 2-phosphoglycerate (2-PG) into phosphoenolpyruvate (PEP). It is essential for the degradation of carbohydrates via glycolysis. This is Enolase from Shewanella baltica (strain OS155 / ATCC BAA-1091).